We begin with the raw amino-acid sequence, 366 residues long: Beta sliding clamp (366 aa).

The protein belongs to the beta sliding clamp family. Forms a ring-shaped head-to-tail homodimer around DNA which binds and tethers DNA polymerases and other proteins to the DNA. The DNA replisome complex has a single clamp-loading complex (3 tau and 1 each of delta, delta', psi and chi subunits) which binds 3 Pol III cores (1 core on the leading strand and 2 on the lagging strand) each with a beta sliding clamp dimer. Additional proteins in the replisome are other copies of gamma, psi and chi, Ssb, DNA helicase and RNA primase.

The protein resides in the cytoplasm. In terms of biological role, confers DNA tethering and processivity to DNA polymerases and other proteins. Acts as a clamp, forming a ring around DNA (a reaction catalyzed by the clamp-loading complex) which diffuses in an ATP-independent manner freely and bidirectionally along dsDNA. Initially characterized for its ability to contact the catalytic subunit of DNA polymerase III (Pol III), a complex, multichain enzyme responsible for most of the replicative synthesis in bacteria; Pol III exhibits 3'-5' exonuclease proofreading activity. The beta chain is required for initiation of replication as well as for processivity of DNA replication. The polypeptide is Beta sliding clamp (dnaN) (Vibrio cholerae serotype O1 (strain ATCC 39315 / El Tor Inaba N16961)).